The following is a 141-amino-acid chain: uncharacterized protein (141 aa).

A compositionally biased stretch (low complexity) spans 1–39; it reads MNNNNNNNNNNNNNNNNNNNNNNNNNSYDSNHSSSSYTS. The disordered stretch occupies residues 1–48; it reads MNNNNNNNNNNNNNNNNNNNNNNNNNSYDSNHSSSSYTSENQNREQQF. Residues 109–129 traverse the membrane as a helical segment; it reads FFCKIILVFICLVAIYSLVVI.

It is found in the membrane. This is an uncharacterized protein from Dictyostelium discoideum (Social amoeba).